Consider the following 425-residue polypeptide: Oxytetracycline polyketide putative beta-ketoacyl synthase 1 (425 aa).

In terms of domain architecture, Ketosynthase family 3 (KS3) spans 7–420 (ARRVVITGIG…GFQSAIVLTE (414 aa)). Residues Cys-173, His-313, and His-350 each act as for beta-ketoacyl synthase activity in the active site.

The protein belongs to the thiolase-like superfamily. Beta-ketoacyl-ACP synthases family.

It functions in the pathway antibiotic biosynthesis; oxytetracycline biosynthesis. The sequence is that of Oxytetracycline polyketide putative beta-ketoacyl synthase 1 from Streptomyces rimosus.